The sequence spans 300 residues: Probable alpha-L-glutamate ligase (300 aa).

In terms of domain architecture, ATP-grasp spans Leu-104–Glu-287. ATP-binding positions include Lys-141, Glu-178–Tyr-179, Asp-187, and Arg-211–Asn-213. Mg(2+) contacts are provided by Asp-248, Glu-260, and Asn-262. Mn(2+) is bound by residues Asp-248, Glu-260, and Asn-262.

It belongs to the RimK family. Requires Mg(2+) as cofactor. It depends on Mn(2+) as a cofactor.

The sequence is that of Probable alpha-L-glutamate ligase from Klebsiella pneumoniae (strain 342).